A 120-amino-acid polypeptide reads, in one-letter code: rRNA-processing protein CGR1 (120 aa).

2 disordered regions span residues 1–26 (MVNETGESQKAAKGTPVSGKVWKAEK) and 81–120 (ERREKKEENERYERLAAKMHAKKVERMRRREKRNKALKER). Residues 47-106 (KKQKRLEDKQFKERLKALKDEKEEARQAKITMLKERREKKEENERYERLAAKMHAKKVER) adopt a coiled-coil conformation. A compositionally biased stretch (basic and acidic residues) spans 81 to 96 (ERREKKEENERYERLA). Residues 97–113 (AKMHAKKVERMRRREKR) are compositionally biased toward basic residues.

The protein belongs to the CGR1 family.

The protein resides in the nucleus. The protein localises to the nucleolus. Its function is as follows. Involved in nucleolar integrity and required for processing of the pre-rRNA for the 60S ribosome subunit. This Saccharomyces cerevisiae (strain ATCC 204508 / S288c) (Baker's yeast) protein is rRNA-processing protein CGR1 (CGR1).